Reading from the N-terminus, the 146-residue chain is Acidic phospholipase A2 D (146 aa).

Residues 1-21 form the signal peptide; the sequence is MNPAHLLILAAVCVSPLGASS. The propeptide occupies 22 to 27; it reads NRPMPL. 7 disulfides stabilise this stretch: Cys38-Cys98, Cys53-Cys145, Cys55-Cys71, Cys70-Cys126, Cys77-Cys119, Cys87-Cys112, and Cys105-Cys117. The Ca(2+) site is built by Tyr54, Gly56, and Gly58. Residue His74 is part of the active site. Asp75 lines the Ca(2+) pocket. Asp120 is a catalytic residue.

It belongs to the phospholipase A2 family. Group I subfamily. D49 sub-subfamily. It depends on Ca(2+) as a cofactor. As to expression, expressed by the venom gland.

It localises to the secreted. It carries out the reaction a 1,2-diacyl-sn-glycero-3-phosphocholine + H2O = a 1-acyl-sn-glycero-3-phosphocholine + a fatty acid + H(+). PLA2 catalyzes the calcium-dependent hydrolysis of the 2-acyl groups in 3-sn-phosphoglycerides. The chain is Acidic phospholipase A2 D from Naja sputatrix (Malayan spitting cobra).